The chain runs to 425 residues: Tyrosine--tRNA ligase (425 aa).

L-tyrosine is bound at residue Tyr-37. Residues 42-51 carry the 'HIGH' region motif; it reads PTADSLHLGH. Tyr-175 and Gln-179 together coordinate L-tyrosine. Residues 235-239 carry the 'KMSKS' region motif; sequence KFGKT. ATP is bound at residue Lys-238. The 58-residue stretch at 357-414 folds into the S4 RNA-binding domain; the sequence is ADLQQALVSAELVPSRGQARTMISSNAVTINGEKQADPEYTFSASDRLFDRYTLLRRG.

Belongs to the class-I aminoacyl-tRNA synthetase family. TyrS type 1 subfamily. Homodimer.

The protein resides in the cytoplasm. The catalysed reaction is tRNA(Tyr) + L-tyrosine + ATP = L-tyrosyl-tRNA(Tyr) + AMP + diphosphate + H(+). In terms of biological role, catalyzes the attachment of tyrosine to tRNA(Tyr) in a two-step reaction: tyrosine is first activated by ATP to form Tyr-AMP and then transferred to the acceptor end of tRNA(Tyr). The polypeptide is Tyrosine--tRNA ligase (Pectobacterium carotovorum subsp. carotovorum (strain PC1)).